The following is a 327-amino-acid chain: Nitrogenase iron protein (327 aa).

Positions 1-37 (MGRNSQGFLTTIRIIVTSATDQPSNFIHSLSNKREST) are PEST-like; not found in other NifH. Residue 45-52 (GKGGIGKS) participates in ATP binding. Cys-132 contacts [4Fe-4S] cluster. Arg-135 is modified (ADP-ribosylarginine; by dinitrogenase reductase ADP-ribosyltransferase). Cys-166 is a binding site for [4Fe-4S] cluster.

It belongs to the NifH/BchL/ChlL family. In terms of assembly, homodimer. Requires [4Fe-4S] cluster as cofactor. In terms of processing, the reversible ADP-ribosylation of Arg-135 inactivates the nitrogenase reductase and regulates nitrogenase activity.

It catalyses the reaction N2 + 8 reduced [2Fe-2S]-[ferredoxin] + 16 ATP + 16 H2O = H2 + 8 oxidized [2Fe-2S]-[ferredoxin] + 2 NH4(+) + 16 ADP + 16 phosphate + 6 H(+). Functionally, the key enzymatic reactions in nitrogen fixation are catalyzed by the nitrogenase complex, which has 2 components: the iron protein and the molybdenum-iron protein. This Crocosphaera subtropica (strain ATCC 51142 / BH68) (Cyanothece sp. (strain ATCC 51142)) protein is Nitrogenase iron protein (nifH).